A 520-amino-acid polypeptide reads, in one-letter code: Nuclear GTP-binding protein NUG1 (520 aa).

Basic residues-rich tracts occupy residues 1 to 13 (MRVR…RTST) and 21 to 34 (KKAS…KKMA). Positions 1–53 (MRVRKRQSRRTSTKLKEGIKKKASAHRKKEKKMAKKDVTWRSRSKKDPGIPSN) are disordered. A compositionally biased stretch (basic and acidic residues) spans 35-48 (KKDVTWRSRSKKDP). Residues 165–343 (YDKIFKSVID…ILDSPGICFP (179 aa)) form the CP-type G domain. GTP contacts are provided by residues 213-216 (NKVD), 287-294 (GYPNVGKS), and 336-339 (DSPG). Residue Ser337 is modified to Phosphoserine.

This sequence belongs to the TRAFAC class YlqF/YawG GTPase family.

Its subcellular location is the nucleus. Functionally, GTPase required for 60S ribosomal subunit export to the cytoplasm. The polypeptide is Nuclear GTP-binding protein NUG1 (NUG1) (Saccharomyces cerevisiae (strain ATCC 204508 / S288c) (Baker's yeast)).